A 270-amino-acid polypeptide reads, in one-letter code: uncharacterized protein (270 aa).

The region spanning 43–112 (CTANDIKRKY…REEYDRFGIH (70 aa)) is the J domain. The segment at 239–270 (EQSKQIPTQQKPSSLPPPERALPAPTMPTPSS) is disordered. Over residues 242–251 (KQIPTQQKPS) the composition is skewed to polar residues. Residues 252–270 (SLPPPERALPAPTMPTPSS) are compositionally biased toward pro residues.

This is an uncharacterized protein from Schizosaccharomyces pombe (strain 972 / ATCC 24843) (Fission yeast).